The chain runs to 648 residues: Wilms tumor protein 1-interacting protein homolog (648 aa).

3 disordered regions span residues 27 to 56 (DGMY…KVYS), 142 to 291 (SNSL…SPRS), and 306 to 327 (SPRS…GSMS). Composition is skewed to low complexity over residues 158 to 171 (SPRS…SSQD) and 178 to 192 (PRSS…LVSP). Polar residues-rich tracts occupy residues 197-213 (GTSV…TASD) and 220-241 (PRTS…TSGI). Residues 252–267 (PRSSTTSPRSSYSDSR) show a composition bias toward low complexity. 3 LIM zinc-binding domains span residues 437–498 (GICV…SGFQ), 502–561 (EKCF…TVFA), and 562–631 (PKCA…RLKT).

This sequence belongs to the zyxin/ajuba family.

The protein resides in the cell junction. The protein localises to the adherens junction. It localises to the nucleus. Functionally, may monitor slit diaphragm protein assembly, a specialized adherens junction characteristic of podocytes. In case of podocyte injury, it shuttles into the nucleus and acts as a transcription regulator. Plays a role in the regulation of cell morphology and cytoskeletal organization. Acts as a transcriptional corepressor for snai1 and snai2/slug and plays a role in regulating neural crest development. The protein is Wilms tumor protein 1-interacting protein homolog (wtip) of Danio rerio (Zebrafish).